The sequence spans 504 residues: ATP synthase subunit alpha (504 aa).

Position 169–176 (169–176 (GDRKTGKT)) interacts with ATP.

This sequence belongs to the ATPase alpha/beta chains family. F-type ATPases have 2 components, CF(1) - the catalytic core - and CF(0) - the membrane proton channel. CF(1) has five subunits: alpha(3), beta(3), gamma(1), delta(1), epsilon(1). CF(0) has three main subunits: a(1), b(2) and c(9-12). The alpha and beta chains form an alternating ring which encloses part of the gamma chain. CF(1) is attached to CF(0) by a central stalk formed by the gamma and epsilon chains, while a peripheral stalk is formed by the delta and b chains.

It is found in the cell membrane. It carries out the reaction ATP + H2O + 4 H(+)(in) = ADP + phosphate + 5 H(+)(out). Its function is as follows. Produces ATP from ADP in the presence of a proton gradient across the membrane. The alpha chain is a regulatory subunit. The sequence is that of ATP synthase subunit alpha from Lactiplantibacillus plantarum (strain ATCC BAA-793 / NCIMB 8826 / WCFS1) (Lactobacillus plantarum).